A 490-amino-acid chain; its full sequence is Protein lag-3 (490 aa).

5 disordered regions span residues 18–55 (PSVA…EDEP), 105–155 (EDEE…PTSE), 213–235 (SSAD…SPAE), 307–362 (SSSE…MQRI), and 391–490 (QQQQ…ANIN). Basic and acidic residues predominate over residues 105 to 119 (EDEERKRVEQQKNKE). Positions 122–138 (NASTSAPTSSRNGGQSV) are enriched in polar residues. A compositionally biased stretch (polar residues) spans 307-318 (SSSESPTKQSPM). Composition is skewed to low complexity over residues 341–359 (QLQQ…QQEM), 391–404 (QQQQ…HHQM), and 413–456 (QAHQ…HHQM).

In terms of assembly, component of a complex consisting of at least a lin-12/Notch intracellular domain (NICD), lag-1, and lag-3. Interacts with a NICD of lin-12/Notch or glp-1/Notch; the interactions are direct. Expressed in the progenitor zone and the early pachytene region of the hermaphrodite gonad.

It localises to the nucleus. Glp-1/Notch and lin-12/Notch proteins promote signaling by recruiting lag-3 to target promoters, where it functions as a transcriptional activator, probably as part of a complex with a Notch intracellular domain (NICD) and the transcription regulator lag-1. Involved in the p53-mediated germ-cell apoptotic response to DNA damage, perhaps acting as a transcriptional activator. May regulate phosphatase lip-1 mRNA transcription downstream of glp-1. The sequence is that of Protein lag-3 (sel-8) from Caenorhabditis elegans.